We begin with the raw amino-acid sequence, 85 residues long: MKVTLIAILTCAAVLVLHTTAAEELEAESQLMEVGMPDTELAAVDEERLFECSVSCEIEKEGNKDCKKKKCRGGRKCKFNMCVKV.

Residues 1-22 (MKVTLIAILTCAAVLVLHTTAA) form the signal peptide. A propeptide spanning residues 23-48 (EELEAESQLMEVGMPDTELAAVDEER) is cleaved from the precursor. 3 disulfides stabilise this stretch: cysteine 52–cysteine 66, cysteine 56–cysteine 77, and cysteine 71–cysteine 82.

The protein belongs to the neurotoxin 12 (Hwtx-2) family. 02 (Hwtx-2) subfamily. As to expression, expressed by the venom gland.

It is found in the secreted. Its function is as follows. Postsynaptic neurotoxin. The sequence is that of U4-theraphotoxin-Hhn1q from Cyriopagopus hainanus (Chinese bird spider).